The sequence spans 367 residues: DNA replication and repair protein RecF (367 aa).

ATP is bound at residue 30–37; sequence GDNAQGKT.

This sequence belongs to the RecF family.

The protein localises to the cytoplasm. The RecF protein is involved in DNA metabolism; it is required for DNA replication and normal SOS inducibility. RecF binds preferentially to single-stranded, linear DNA. It also seems to bind ATP. This is DNA replication and repair protein RecF from Clostridium beijerinckii (strain ATCC 51743 / NCIMB 8052) (Clostridium acetobutylicum).